The sequence spans 446 residues: Tubulin beta-6 chain (446 aa).

GTP-binding residues include glutamine 11, glutamate 69, serine 138, glycine 142, threonine 143, glycine 144, asparagine 204, and asparagine 226. Glutamate 69 is a binding site for Mg(2+). The tract at residues 426–446 is disordered; that stretch reads QDATADEEEYEDEEEVQADDM. Over residues 429–446 the composition is skewed to acidic residues; that stretch reads TADEEEYEDEEEVQADDM.

The protein belongs to the tubulin family. In terms of assembly, dimer of alpha and beta chains. A typical microtubule is a hollow water-filled tube with an outer diameter of 25 nm and an inner diameter of 15 nM. Alpha-beta heterodimers associate head-to-tail to form protofilaments running lengthwise along the microtubule wall with the beta-tubulin subunit facing the microtubule plus end conferring a structural polarity. Microtubules usually have 13 protofilaments but different protofilament numbers can be found in some organisms and specialized cells. It depends on Mg(2+) as a cofactor.

The protein localises to the cytoplasm. It is found in the cytoskeleton. Its function is as follows. Tubulin is the major constituent of microtubules, a cylinder consisting of laterally associated linear protofilaments composed of alpha- and beta-tubulin heterodimers. Microtubules grow by the addition of GTP-tubulin dimers to the microtubule end, where a stabilizing cap forms. Below the cap, tubulin dimers are in GDP-bound state, owing to GTPase activity of alpha-tubulin. The chain is Tubulin beta-6 chain (TUBB6) from Zea mays (Maize).